We begin with the raw amino-acid sequence, 280 residues long: Large ribosomal subunit protein uL2 (280 aa).

The interval D229–K280 is disordered.

Belongs to the universal ribosomal protein uL2 family. Part of the 50S ribosomal subunit. Forms a bridge to the 30S subunit in the 70S ribosome.

Functionally, one of the primary rRNA binding proteins. Required for association of the 30S and 50S subunits to form the 70S ribosome, for tRNA binding and peptide bond formation. It has been suggested to have peptidyltransferase activity; this is somewhat controversial. Makes several contacts with the 16S rRNA in the 70S ribosome. The protein is Large ribosomal subunit protein uL2 of Dictyoglomus turgidum (strain DSM 6724 / Z-1310).